Reading from the N-terminus, the 324-residue chain is Olfactory receptor 52I1 (324 aa).

The Extracellular segment spans residues 1-29 (MLGPAYNHTMETPASFLLVGIPGLQSSHL). N-linked (GlcNAc...) asparagine glycosylation is present at Asn7. Residues 30–50 (WLAISLSAMYITALLGNTLIV) form a helical membrane-spanning segment. The Cytoplasmic segment spans residues 51-58 (TAIWMDST). The chain crosses the membrane as a helical span at residues 59-79 (RHEPMYCFLCVLAAVDIVMAS). Residues 80 to 103 (SVVPKMVSIFCSGDSSISFSACFT) lie on the Extracellular side of the membrane. Cys101 and Cys193 are oxidised to a cystine. Residues 104–124 (QMFFVHLATAVETGLLLTMAF) form a helical membrane-spanning segment. The Cytoplasmic segment spans residues 125–143 (DRYVAICKPLHYKRILTPQ). Residues 144–164 (VMLGMSMAVTIRAVTFMTPLS) traverse the membrane as a helical segment. Residues 165 to 200 (WMMNHLPFCGSNVVVHSYCKHIALARLACADPVPSS) are Extracellular-facing. A helical membrane pass occupies residues 201–221 (LYSLIGSSLMVGSDVAFIAAS). Over 222–241 (YILILRAVFDLSSKTAQLKA) the chain is Cytoplasmic. A helical membrane pass occupies residues 242-262 (LSTCGSHVGVMALYYLPGMAS). Topologically, residues 263-278 (IYAAWLGQDIVPLHTQ) are extracellular. The helical transmembrane segment at 279 to 299 (VLLADLYVIIPATLNPIIYGM) threads the bilayer. The Cytoplasmic portion of the chain corresponds to 300–324 (RTKQLLEGIWSYLMHFLFDHSNLGS).

The protein belongs to the G-protein coupled receptor 1 family.

The protein resides in the cell membrane. Odorant receptor. This chain is Olfactory receptor 52I1 (OR52I1), found in Homo sapiens (Human).